We begin with the raw amino-acid sequence, 307 residues long: Acetaldehyde dehydrogenase (307 aa).

Cys-131 (acyl-thioester intermediate) is an active-site residue. Residues 162-170 (SIGPGTRKN) and Asn-273 contribute to the NAD(+) site.

The protein belongs to the acetaldehyde dehydrogenase family.

The enzyme catalyses acetaldehyde + NAD(+) + CoA = acetyl-CoA + NADH + H(+). This chain is Acetaldehyde dehydrogenase (nahO), found in Stutzerimonas stutzeri (Pseudomonas stutzeri).